A 322-amino-acid chain; its full sequence is CMP-sialic acid transporter 1 (322 aa).

Residues 1–2 (MQ) lie on the Cytoplasmic side of the membrane. The chain crosses the membrane as a helical span at residues 3 to 23 (WYLVAALLTVLTSSQGILTTL). Residues 24–33 (SQSNGKYKYD) lie on the Lumenal side of the membrane. The chain crosses the membrane as a helical span at residues 34-54 (YATIPFLAELFKLSFSSFFLW). Residues 55–75 (KECQSSSPPRMTKEWRSIRLY) are Cytoplasmic-facing. A helical membrane pass occupies residues 76–96 (LVPSVIYLIHNNVQFATLTYV). Residues 97–100 (DPST) are Lumenal-facing. A helical membrane pass occupies residues 101–120 (YQIMGNLKIVTTGILFRLVL). Over 121–126 (KRKLSN) the chain is Cytoplasmic. The chain crosses the membrane as a helical span at residues 127-144 (LQWMAVVLLAVGTTTSQV). Over 145-157 (KGCGDAPCDSLFS) the chain is Lumenal. Residues 158-178 (APFQGYMLGILSACLSALAGV) traverse the membrane as a helical segment. Topologically, residues 179-198 (YTEYLMKKNNDSLYWQNVQL) are cytoplasmic. The chain crosses the membrane as a helical span at residues 199-219 (YTFGVIFNMGWLIYGDFKAGF). At 220-233 (ERGPWWQRLFNGYS) the chain is on the lumenal side. A helical transmembrane segment spans residues 234-254 (ITTWMVVFNLGSTGLLVSWLM). Residues 255–262 (KYSDNIVK) lie on the Cytoplasmic side of the membrane. Residues 263-283 (VYSTSMAMLLTMVLSVYLFNV) traverse the membrane as a helical segment. Residues 284 to 286 (RAT) lie on the Lumenal side of the membrane.

This sequence belongs to the nucleotide-sugar transporter family. CMP-Sialate:CMP antiporter (TC 2.A.7.12) subfamily. Expressed in roots, leaves and stalks.

It is found in the golgi apparatus membrane. Functionally, sugar transporter involved in the transport of CMP-sialic acid from the cytoplasm into the Golgi. May transport important nucleotide sugars such as CMP-Kdo (2-keto-3-deoxy-D-manno-octulosonic acid) in physiological conditions. This is CMP-sialic acid transporter 1 from Oryza sativa subsp. japonica (Rice).